A 98-amino-acid chain; its full sequence is MIEKIIKESREGVLIDIDVQANAKKNEIVGINEWRKRLSIKIKAPATEGKANKEIIKFFKEIFKKDVEIVSGKLNPQKTVLIGDIKKDEVIEILKRYL.

This sequence belongs to the UPF0235 family.

The protein is UPF0235 protein MJ0618 of Methanocaldococcus jannaschii (strain ATCC 43067 / DSM 2661 / JAL-1 / JCM 10045 / NBRC 100440) (Methanococcus jannaschii).